Consider the following 206-residue polypeptide: MARYLGPKLKLSRREGTDLFLKSGVRAIESKCKIDNAPGVHGARKPRLSDYGLQLREKQKVRRMYGVLEKQFRNYYKESARLQGNTGENLLQLLEGRLDNVVYRMGFGATRAESRQLVSHKAVLVNGKVVNIPSFNVKASDVIAIREKAKKQSRIGAALEIAGQREVPTWVSVDATKMEGIFTRQPERSDLSAEINEQLIIELYSK.

The 61-residue stretch at 96-156 folds into the S4 RNA-binding domain; sequence GRLDNVVYRM…EKAKKQSRIG (61 aa).

It belongs to the universal ribosomal protein uS4 family. As to quaternary structure, part of the 30S ribosomal subunit. Contacts protein S5. The interaction surface between S4 and S5 is involved in control of translational fidelity.

One of the primary rRNA binding proteins, it binds directly to 16S rRNA where it nucleates assembly of the body of the 30S subunit. Its function is as follows. With S5 and S12 plays an important role in translational accuracy. The polypeptide is Small ribosomal subunit protein uS4B (Psychromonas ingrahamii (strain DSM 17664 / CCUG 51855 / 37)).